A 217-amino-acid polypeptide reads, in one-letter code: MKSAVMAVACAAAPGLRRPSAFNGAALTTSAKSSSAMKMSFESEIGAQAPLGFWDPLGLLADADQDGFERLRYVEVKHGRIAMLAIAGHLTQQNARLPGMLSNSANLSFADMPNGVAALSKIPPAGLAQIFAFIGFLELAVMKNVEGSFPGDFTLGGNPFGASWDAMSEETQASKRAIELNNGRAAQMGILALMVHEELNNKPYVINDLVGASYTFN.

A chloroplast-targeting transit peptide spans 1–39 (MKSAVMAVACAAAPGLRRPSAFNGAALTTSAKSSSAMKM). Helical transmembrane passes span 81-101 (IAML…PGML), 122-142 (IPPA…LAVM), and 183-203 (GRAA…NNKP).

Belongs to the fucoxanthin chlorophyll protein family. The LHC complex of chromophytic algae is composed of fucoxanthin, chlorophyll A and C bound non-covalently by fucoxanthin chlorophyll proteins (FCPs). The ratio of pigments in this LHC is; fucoxanthin: chlorophyll C: chlorophyll A; (0.6-1): (0.1-0.3): (1).

The protein localises to the plastid. The protein resides in the chloroplast thylakoid membrane. Functionally, the light-harvesting complex (LHC) functions as a light receptor, it captures and delivers excitation energy to photosystems with which it is closely associated. Energy is transferred from the carotenoid and chlorophyll C (or B) to chlorophyll A and the photosynthetic reaction centers where it is used to synthesize ATP and reducing power. The sequence is that of Fucoxanthin-chlorophyll a-c binding protein A, chloroplastic (FCPA) from Macrocystis pyrifera (Giant kelp).